The primary structure comprises 3375 residues: Basement membrane proteoglycan (3375 aa).

Positions 1–22 (MKRSSTVLAALLALLLVATNDA) are cleaved as a signal peptide. In terms of domain architecture, Ig-like C2-type 1 spans 45–130 (VQITVFPSEK…NTVEARATLS (86 aa)). Intrachain disulfides connect Cys66–Cys114, Cys149–Cys161, Cys156–Cys174, Cys168–Cys183, Cys190–Cys202, Cys197–Cys215, Cys209–Cys224, Cys233–Cys246, Cys240–Cys259, Cys253–Cys268, and Cys293–Cys344. LDL-receptor class A domains are found at residues 148–184 (QCMADEKACGNNECVKNDYVCDGEPDCRDRSDEANCP), 189–225 (TCEPNEFKCNNNKCVQKMWLCDGDDDCGDNSDELNCN), and 232–269 (DCKPTEFQCHDRRQCVPSSFHCDGTNDCHDGSDEVGCV). An Ig-like C2-type 2 domain is found at 271–355 (PTVVDPPQTN…AINVKGRVLA (85 aa)). Residues 364–385 (VDDPRPQPPQPPTAPPQRASCD) are disordered. Pro residues predominate over residues 369–378 (PQPPQPPTAP). 3 disulfides stabilise this stretch: Cys384-Cys400, Cys402-Cys411, and Cys414-Cys429. The Laminin EGF-like 1; truncated domain maps to 384-431 (CDTRGAVTPYPNNYGTCECKSQVTGPNCDQCKPGAFHLSEKSPEGCLK). The region spanning 432–441 (CFCFGVSNDC) is the Laminin EGF-like 2; first part domain. Residues 450-633 (KDRLMFAGDA…PDGLALEVEQ (184 aa)) enclose the Laminin IV type A 1 domain. Intrachain disulfides connect Cys634-Cys648, Cys636-Cys689, Cys691-Cys700, and Cys703-Cys718. Residues 634–666 (CVCPPGYLGTSCEDCAPGYERSGYGPYLGTCVP) form the Laminin EGF-like 2; second part domain. The Laminin EGF-like 3; truncated domain occupies 674–720 (CGPGAVAPTAPAQGQCQCKASVIGPNCDRCAPNSFGLAPTNPQGCIP). Residues 721–730 (CFCSGVTQQC) form the Laminin EGF-like 4; first part domain. Residues 740–921 (VSIDYARGDR…QGLTAAEVEQ (182 aa)) enclose the Laminin IV type A 2 domain. In terms of domain architecture, Laminin EGF-like 4; second part spans 922–954 (CICPPGYVGTSCEDCAPGYSRTGGGLYLGLCEK). Disulfide bonds link Cys955/Cys964, Cys957/Cys971, Cys974/Cys983, Cys986/Cys1002, Cys1011/Cys1021, Cys1013/Cys1027, Cys1030/Cys1039, Cys1042/Cys1058, Cys1061/Cys1069, Cys1063/Cys1079, Cys1082/Cys1091, Cys1094/Cys1109, Cys1152/Cys1200, Cys1247/Cys1294, and Cys1338/Cys1384. 3 Laminin EGF-like domains span residues 955 to 1004 (CECN…DCQP), 1011 to 1060 (CHCN…DCTP), and 1061 to 1111 (CPCP…VCEP). 15 consecutive Ig-like C2-type domains span residues 1126-1222 (PHEV…KRIS), 1226-1311 (PQPV…AVLE), 1319-1401 (PKVD…EPVQ), 1410-1499 (PQRG…ARLN), 1503-1585 (PQAI…RPVE), 1588-1680 (PARV…TPAT), 1690-1785 (PQVE…STLN), 1793-1878 (PRPV…VRLE), 1886-1970 (PTAV…GNVN), 1973-2069 (PSLT…IYIE), 2073-2163 (PSRI…AVHV), 2173-2260 (PKVE…TAVS), 2263-2343 (QQDK…GFVT), 2349-2435 (PDTI…RTVL), and 2446-2530 (TFTV…VDLQ). Residues 1388 to 1400 (DPSDNTPLQSEPV) are compositionally biased toward polar residues. 2 disordered regions span residues 1388–1426 (DPSDNTPLQSEPVQLNIRDPAPPQRGAAPQIDPPNQTVN) and 1478–1497 (EYECTSTEPDGSTQLSPPAR). Residue Asn1422 is glycosylated (N-linked (GlcNAc...) asparagine). Disulfide bonds link Cys1435/Cys1481, Cys1527/Cys1573, Cys1618/Cys1663, and Cys1719/Cys1767. A compositionally biased stretch (polar residues) spans 1481–1497 (CTSTEPDGSTQLSPPAR). The disordered stretch occupies residues 1773–1792 (NSPPVKTNPSTLNVTPEGTP). Residues 1776–1788 (PVKTNPSTLNVTP) show a composition bias toward polar residues. Intrachain disulfides connect Cys1814-Cys1861, Cys1907-Cys1954, Cys1998-Cys2053, Cys2099-Cys2147, Cys2195-Cys2242, Cys2284-Cys2329, Cys2374-Cys2420, Cys2467-Cys2514, Cys2713-Cys2725, Cys2719-Cys2736, Cys2738-Cys2747, Cys2754-Cys2764, Cys2759-Cys2773, Cys2775-Cys2784, and Cys2935-Cys2960. The segment at 1880 to 1918 (TEDQEPPTAVVEPRTWNGKPGERHQFRCITTGSPTPKIT) is disordered. The span at 1907 to 1918 (CITTGSPTPKIT) shows a compositional bias: polar residues. N-linked (GlcNAc...) asparagine glycosylation is present at Asn2476. The region spanning 2532–2713 (DDFIPVIDGE…PSSVVKYDAC (182 aa)) is the Laminin G-like 1 domain. The region spanning 2793-2960 (PLGFTSDTSF…LSSSGDISSC (168 aa)) is the Laminin G-like 2 domain. N-linked (GlcNAc...) asparagine glycosylation occurs at Asn2950. Positions 2952–2963 (SSSGDISSCEES) are enriched in low complexity. Residues 2952–3124 (SSSGDISSCE…GTLPPDSSSE (173 aa)) are disordered. Composition is skewed to acidic residues over residues 2979–2990 (EEPEAVIEEPTT) and 2999–3010 (PITEEPTEEPTT). A compositionally biased stretch (low complexity) spans 3011 to 3033 (TEEPTTTEEPTTTTEEPTTTTTE). Positions 3034 to 3044 (EPYHIYETSRD) are enriched in basic and acidic residues. Residues 3049 to 3079 (IIIPVETTTTSTTTTSTTEEPEAEPALVLPT) are compositionally biased toward low complexity. Residues 3081-3094 (PVEENDVSDEEEEI) are compositionally biased toward acidic residues. 4 disulfides stabilise this stretch: Cys3141–Cys3152, Cys3146–Cys3162, Cys3164–Cys3173, and Cys3333–Cys3359. N-linked (GlcNAc...) asparagine glycans are attached at residues Asn3143 and Asn3156. The Laminin G-like 3 domain maps to 3180 to 3359 (EHAARFDGDA…AIDGKNVKPC (180 aa)).

Component of an integrin containing attachment complex, composed of at least pat-2, pat-3, pat-4, pat-6, unc-52, unc-97 and unc-112. As to expression, detected on embryonic and adult body wall muscle cells (at protein level). Found in the basement membrane of all contractile tissues (at protein level). Expressed in gonadal sheath cells and spermatheca.

It is found in the secreted. Its subcellular location is the extracellular space. The protein resides in the extracellular matrix. The protein localises to the basement membrane. It localises to the cytoplasm. It is found in the myofibril. Its subcellular location is the sarcomere. The protein resides in the m line. Its function is as follows. Component of an integrin containing attachment complex, which is required for muscle development and maintenance. Probable structural role in myofilament assembly and/or attachment of the myofilament lattice to the cell membrane. May be an extracellular anchor for integrin receptors in body wall muscles and myoepithelial sheath cells. During the formation of neuromuscular junctions at the larval stage, negatively regulates membrane protrusion from body wall muscles, probably downstream of the integrin complex formed by pat-2 and pat-3. Involved in ovulation. Required for normal lifespan. This Caenorhabditis elegans protein is Basement membrane proteoglycan.